Here is a 314-residue protein sequence, read N- to C-terminus: tRNA dimethylallyltransferase 1 (314 aa).

17-24 serves as a coordination point for ATP; sequence GPTAAGKT. 19–24 is a binding site for substrate; sequence TAAGKT. Positions 42 to 45 are interaction with substrate tRNA; it reads DSRQ.

This sequence belongs to the IPP transferase family. Monomer. Requires Mg(2+) as cofactor.

The enzyme catalyses adenosine(37) in tRNA + dimethylallyl diphosphate = N(6)-dimethylallyladenosine(37) in tRNA + diphosphate. In terms of biological role, catalyzes the transfer of a dimethylallyl group onto the adenine at position 37 in tRNAs that read codons beginning with uridine, leading to the formation of N6-(dimethylallyl)adenosine (i(6)A). This Syntrophotalea carbinolica (strain DSM 2380 / NBRC 103641 / GraBd1) (Pelobacter carbinolicus) protein is tRNA dimethylallyltransferase 1.